The chain runs to 652 residues: Interferon-induced GTP-binding protein Mx1 (652 aa).

Positions 1–27 (MKERTSACRHGTPQKHPDTSEESQAME) are disordered. In terms of domain architecture, Dynamin-type G spans 58-331 (DLALPAIAVI…LTSHICKSLP (274 aa)). Residues 68-75 (GDQSSGKS) are G1 motif. 68–75 (GDQSSGKS) is a binding site for GTP. The interval 93–95 (VTR) is G2 motif. The interval 169 to 172 (DLPG) is G3 motif. GTP contacts are provided by residues 169-173 (DLPGI) and 238-241 (TKPD). The segment at 238 to 241 (TKPD) is G4 motif. The interval 270 to 273 (KCRG) is G5 motif. The tract at residues 332–357 (ILENQINVNHQIASEELQKYGADIPE) is bundle signaling element (BSE). The middle domain stretch occupies residues 357–526 (EDDSKRLSFL…HFQMEHIVYC (170 aa)). The stalk stretch occupies residues 358–622 (DDSKRLSFLM…TSKCNWFLTE (265 aa)). In terms of domain architecture, GED spans 564 to 652 (TTEMTQHLNA…AQRKLAKFSN (89 aa)).

Belongs to the TRAFAC class dynamin-like GTPase superfamily. Dynamin/Fzo/YdjA family. As to quaternary structure, homooligomer. Oligomerizes into multimeric filamentous or ring-like structures by virtue of its stalk domain. Oligomerization is critical for GTPase activity, protein stability, and recognition of viral target structures. Interacts with TRPC1, TRPC3, TRPC4, TRPC5, TRPC6 and TRPC7. Interacts with HSPA5. Interacts with TUBB/TUBB5. Interacts with DDX39A and DDX39B. Post-translationally, ISGylated.

It is found in the nucleus. Its subcellular location is the cytoplasm. The protein localises to the endoplasmic reticulum membrane. The protein resides in the perinuclear region. Functionally, interferon-induced dynamin-like GTPase which has antiviral activity against influenza A virus, (IAV) and Thogoto virus (THOV). Inhibits IAV by interfering with the process of primary transcription, probably by affecting the viral polymerase function. This is Interferon-induced GTP-binding protein Mx1 (Mx1) from Rattus norvegicus (Rat).